A 567-amino-acid chain; its full sequence is Hexose transporter HXT15 (567 aa).

Polar residues predominate over residues 1-19 (MASEQSSPEINADNLNSSA). Residues 1–32 (MASEQSSPEINADNLNSSAADVHVQPPGEKEW) form a disordered region. At 1–55 (MASEQSSPEINADNLNSSAADVHVQPPGEKEWSDGFYDKEVINGNTPDAPKRGFL) the chain is on the cytoplasmic side. A helical transmembrane segment spans residues 56-76 (GYLIIYLLCYPVSFGGFLPGW). Residues 77 to 112 (DSGITAGFINMDNFKMNFGSYKHSTGEYYLSNVRMG) lie on the Extracellular side of the membrane. Residues 113-133 (LLVAMFSVGCSIGGVAFARLA) traverse the membrane as a helical segment. At 134 to 139 (DTLGRR) the chain is on the cytoplasmic side. A helical transmembrane segment spans residues 140 to 160 (LAIVIVVLVYMVGAIIQISSN). The Extracellular segment spans residues 161–170 (HKWYQYFVGK). Residues 171 to 191 (IIYGLGAGGCSVLCPMLLSEI) traverse the membrane as a helical segment. The Cytoplasmic portion of the chain corresponds to 192 to 197 (APTDLR). The chain crosses the membrane as a helical span at residues 198–218 (GGLVSLYQLNMTFGIFLGYCS). Over 219–232 (VYGTRKYSNTAQWR) the chain is Extracellular. The chain crosses the membrane as a helical span at residues 233-253 (IPVGLCFLWALIIIVGMLLVP). Over 254-336 (ESPRYLIECE…VQTFLQLTGE (83 aa)) the chain is Cytoplasmic. The chain crosses the membrane as a helical span at residues 337–353 (NYFFFYGTTIFKSVGLT). Residues 354–359 (DGFETS) are Extracellular-facing. Residues 360–377 (IVLGTVNFFSTIIAVMVV) traverse the membrane as a helical segment. Residues 378 to 384 (DKIGRRK) lie on the Cytoplasmic side of the membrane. The helical transmembrane segment at 385–405 (CLLFGAASMMACMVIFASIGV) threads the bilayer. At 406–427 (KCLYPHGQDGPSSKGAGNAMIV) the chain is on the extracellular side. The helical transmembrane segment at 428–448 (FTCFYIFCFATTWAPVAYIVV) threads the bilayer. Over 449 to 465 (AESFPSKVKSKAMSIST) the chain is Cytoplasmic. A helical transmembrane segment spans residues 466-486 (AFNWLWQFLIGFFTPFITGSI). Residue H487 is a topological domain, extracellular. Residues 488–508 (FYYGYVFVGCLVAMFLYVFFF) traverse the membrane as a helical segment. Residues 509–567 (LPETIGLSLEEIQLLYEEGIKPWKSASWVPPSRRGASSRETEAKKKSWKEVLKFPKSFN) are Cytoplasmic-facing. The interval 533-555 (SASWVPPSRRGASSRETEAKKKS) is disordered. Over residues 545–555 (SSRETEAKKKS) the composition is skewed to basic and acidic residues.

This sequence belongs to the major facilitator superfamily. Sugar transporter (TC 2.A.1.1) family.

It localises to the membrane. Its function is as follows. Probable glucose transporter. The sequence is that of Hexose transporter HXT15 (HXT15) from Saccharomyces cerevisiae (strain ATCC 204508 / S288c) (Baker's yeast).